Here is a 166-residue protein sequence, read N- to C-terminus: Early E3 18.5 kDa glycoprotein (166 aa).

An N-terminal signal peptide occupies residues 1 to 19 (MGPILVLLVLLSLLEAGSA). The Lumenal portion of the chain corresponds to 20-131 (NYDPCLDFDP…SKDNIVTFSI (112 aa)). A glycan (N-linked (GlcNAc...) asparagine; by host) is linked at Asn-31. 2 disulfide bridges follow: Cys-32/Cys-50 and Cys-44/Cys-106. 3 N-linked (GlcNAc...) asparagine; by host glycosylation sites follow: Asn-63, Asn-67, and Asn-97. The helical transmembrane segment at 132-152 (AYCLCACLLTALLCVCIHLLV) threads the bilayer. The Cytoplasmic segment spans residues 153–166 (TTRIKNANNKEKMP). A Di-lysine motif motif is present at residues 162–166 (KEKMP).

The protein belongs to the adenoviridae E19 family. Both disulfide bonds are absolutely critical for the interaction with MHC antigens. Post-translationally, N-glycosylated; high-mannose.

The protein resides in the host endoplasmic reticulum membrane. Its function is as follows. Binds and retains class I heavy chains in the endoplasmic reticulum during the early period of virus infection, thereby impairing their transport to the cell surface. Also delays the expression of class I alleles that it cannot affect by direct retention. Binds transporters associated with antigen processing (TAP) and acts as a tapasin inhibitor, preventing class I/TAP association. In consequence, infected cells are masked for immune recognition by cytotoxic T-lymphocytes. The chain is Early E3 18.5 kDa glycoprotein from Human adenovirus B serotype 11 (strain BC34) (HAdV-11).